The sequence spans 228 residues: Protein boule (228 aa).

Residues 33–110 enclose the RRM domain; it reads NRIFVGGISG…RKLNIAPAIK (78 aa). Residues 151–178 form the DAZ domain; that stretch reads PAAGVPAIYPPSAMQYQPFYQYYSVPMN. Residues 193–214 show a composition bias toward low complexity; it reads PLLHSPTSNPHSPHSQSHPQSP. The interval 193-228 is disordered; it reads PLLHSPTSNPHSPHSQSHPQSPCWSIEDLRDTLPRV. Over residues 219 to 228 the composition is skewed to basic and acidic residues; the sequence is EDLRDTLPRV.

Belongs to the RRM DAZ family. In terms of assembly, interacts with the translational regulator orb2. Testis specific.

The protein resides in the nucleus. It is found in the cytoplasm. Functionally, RNA-binding protein that plays a central role in spermatogenesis. Required for meiotic entry and germline differentiation, at the transition between G2 and M phases of meiosis I. Acts by regulating translation of specific mRNAs, possibly by binding to their 3'-UTR. Essential for translation of twine (twe) mRNA. Required for the expression of various genes such as CG6784, CG17210, CG15841 scpr-B, scpr-C, and rho-6. This Drosophila melanogaster (Fruit fly) protein is Protein boule (bol).